We begin with the raw amino-acid sequence, 185 residues long: MEFQGERGTGPGVSSSSVACSQVTVSRELLTAGSEGSGGIWDQLLISSKPHPRKTSTLQTVRMQRSPLLDQVQAFLPQMAQANEKLRREMAAAPAGHFNIENIDETSGNIIQMDVALFEMSRSDSKEEDSPEESSRDSSGDSSESEEDVCVPSEVTIENIKLPNAEGGKGKIEILDSPASKKKKQ.

Residues Ser34, Ser66, and Ser177 each carry the phosphoserine modification. A disordered region spans residues 121–185 (SRSDSKEEDS…DSPASKKKKQ (65 aa)).

In terms of assembly, interacts with NOP58, RUVBL1 and RUVBL2; the interactions are direct and NOPCHAP1 bridges the association of NOP58 with RUVBL1:RUVBL2 even in absence of snoRNAs. The interactions with RUVBL1 and RUVBL2 are disrupted upon ATP binding.

It localises to the nucleus. Client-loading PAQosome/R2TP complex cofactor that selects NOP58 to promote box C/D small nucleolar ribonucleoprotein (snoRNP) assembly. Acts as a bridge between NOP58 and the R2TP complex via RUVBL1:RUVBL2. This Mus musculus (Mouse) protein is NOP protein chaperone 1.